The following is a 105-amino-acid chain: Unclassified hydrophobin D (105 aa).

A signal peptide spans 1 to 18; it reads MKFYIVLLALAAFAMAEA. 3 disulfides stabilise this stretch: cysteine 35–cysteine 86, cysteine 42–cysteine 83, and cysteine 43–cysteine 49.

The protein resides in the secreted. It localises to the cell wall. In terms of biological role, aerial growth, conidiation, and dispersal of filamentous fungi in the environment rely upon a capability of their secreting small amphipathic proteins called hydrophobins (HPBs) with low sequence identity. Class I can self-assemble into an outermost layer of rodlet bundles on aerial cell surfaces, conferring cellular hydrophobicity that supports fungal growth, development and dispersal; whereas Class II form highly ordered films at water-air interfaces through intermolecular interactions but contribute nothing to the rodlet structure. In P.expansum, hydrophobins contribute to germination, tolerance to cold stress and mycotoxins patulin and citrinin production. The polypeptide is Unclassified hydrophobin D (Penicillium expansum (Blue mold rot fungus)).